Reading from the N-terminus, the 152-residue chain is Large ribosomal subunit protein uL15 (152 aa).

The interval Met-1–Gln-55 is disordered. The segment covering Gly-28 to Ser-42 has biased composition (polar residues).

Belongs to the universal ribosomal protein uL15 family. Part of the 50S ribosomal subunit.

Functionally, binds to the 23S rRNA. The protein is Large ribosomal subunit protein uL15 of Sulfurihydrogenibium sp. (strain YO3AOP1).